The primary structure comprises 625 residues: Interferon-induced GTP-binding protein MxE (625 aa).

Residues D40–P313 enclose the Dynamin-type G domain. The interval G50–S57 is G1 motif. Position 50-57 (G50–S57) interacts with GTP. The tract at residues V75–R77 is G2 motif. The G3 motif stretch occupies residues D151–G154. GTP contacts are provided by residues D151–I155 and T220–D223. Positions T220–D223 are G4 motif. Positions K252–G255 are G5 motif. In terms of domain architecture, GED spans V536–A625.

Belongs to the TRAFAC class dynamin-like GTPase superfamily. Dynamin/Fzo/YdjA family.

It is found in the cytoplasm. The protein is Interferon-induced GTP-binding protein MxE (mxe) of Danio rerio (Zebrafish).